Here is a 327-residue protein sequence, read N- to C-terminus: MTATKQHKKVILVGDGAVGSSYAFALVTQNIAQELGIIDIFKEKTQGDAEDLSHALAFTSPKKIYAADYADCHDADLVVLTAGAPQKPGETRLDLVEKNLRINKEVVTQIVASGFKGIFLVAANPVDILTYSTWKFSGFPKERVIGSGTSLDSARFRQALAAKIGVDARSVHAYIMGEHGDSEFAVWSHANVAGVGLYDWLQANRDVDEQGLVDLFISVRDAAYSIINKKGATFYGIAVALARITKAILDDENAVLPLSVFQEGQYEGVEDCYIGQPAIVGAYGIVRPVNIPLNDAELQKMQASANQLKAIIDEAFSKEEFASAAKN.

NAD(+) is bound by residues V18, D39, K44, Y69, and 83–84; that span reads GA. Residues Q86, R92, and 124–127 each bind substrate; that span reads NPVD. Residues 122–124 and S147 each bind NAD(+); that span reads AAN. Position 152–155 (152–155) interacts with substrate; sequence DSAR. Beta-D-fructose 1,6-bisphosphate is bound by residues R157 and H172. The active-site Proton acceptor is H179. Y224 bears the Phosphotyrosine mark. Residue T233 coordinates substrate.

Belongs to the LDH/MDH superfamily. LDH family. As to quaternary structure, homotetramer.

Its subcellular location is the cytoplasm. It catalyses the reaction (S)-lactate + NAD(+) = pyruvate + NADH + H(+). It participates in fermentation; pyruvate fermentation to lactate; (S)-lactate from pyruvate: step 1/1. With respect to regulation, allosterically activated by fructose 1,6-bisphosphate (FBP). Catalyzes the conversion of lactate to pyruvate. The protein is L-lactate dehydrogenase of Streptococcus equi subsp. zooepidemicus (strain H70).